The chain runs to 457 residues: Glycerol-3-phosphate acyltransferase 3 (457 aa).

The helical transmembrane segment at 14-34 (WLTLVGSLILLPSAFGLSLGI) threads the bilayer. Ser68 and Ser77 each carry phosphoserine. Transmembrane regions (helical) follow at residues 137-157 (ISPKLTIVWVLGVLVRYCFLL) and 161-181 (VTLAFIGISLLIIGTTLVGQL). The HXXXXD motif signature appears at 229–234 (HTSPID). A disordered region spans residues 429-457 (GNGSPSLALDSSTVDNHGSPEPAFRSESL). Over residues 431-444 (GSPSLALDSSTVDN) the composition is skewed to polar residues.

It belongs to the 1-acyl-sn-glycerol-3-phosphate acyltransferase family.

Its subcellular location is the endoplasmic reticulum membrane. It catalyses the reaction sn-glycerol 3-phosphate + an acyl-CoA = a 1-acyl-sn-glycero-3-phosphate + CoA. The enzyme catalyses a 1-acyl-sn-glycero-3-phosphate + an acyl-CoA = a 1,2-diacyl-sn-glycero-3-phosphate + CoA. It carries out the reaction dodecanoyl-CoA + sn-glycerol 3-phosphate = 1-dodecanoyl-sn-glycerol 3-phosphate + CoA. The catalysed reaction is sn-glycerol 3-phosphate + hexadecanoyl-CoA = 1-hexadecanoyl-sn-glycero-3-phosphate + CoA. It catalyses the reaction sn-glycerol 3-phosphate + (9Z)-octadecenoyl-CoA = 1-(9Z-octadecenoyl)-sn-glycero-3-phosphate + CoA. The enzyme catalyses (9Z,12Z)-octadecadienoyl-CoA + sn-glycerol 3-phosphate = 1-(9Z,12Z)-octadecadienoyl-sn-glycero-3-phosphate + CoA. It carries out the reaction 1-tetradecanoyl-sn-glycerol 3-phosphate + (9Z)-octadecenoyl-CoA = 1-tetradecanoyl-2-(9Z)-octadecenoyl-sn-glycero-3-phosphate + CoA. The catalysed reaction is 1-hexadecanoyl-sn-glycero-3-phosphate + (9Z)-octadecenoyl-CoA = 1-hexadecanoyl-2-(9Z-octadecenoyl)-sn-glycero-3-phosphate + CoA. It catalyses the reaction 1-(9Z-octadecenoyl)-sn-glycero-3-phosphate + (9Z)-octadecenoyl-CoA = 1,2-di-(9Z-octadecenoyl)-sn-glycero-3-phosphate + CoA. The enzyme catalyses 1-(6Z,9Z,12Z-octadecatrienoyl)-sn-glycero-3-phosphate + (9Z)-octadecenoyl-CoA = (6Z,9Z,12Z)-octadecatrienoyl-2-(9Z)-octadecenoyl-sn-glycero-3-phosphate + CoA. It carries out the reaction 1-(9Z,12Z,15Z)-octadecatrienoyl-sn-glycero-3-phosphate + (9Z)-octadecenoyl-CoA = 1-(9Z,12Z,15Z)-octadecatrienoyl-2-(9Z)-octadecenoyl-sn-glycero-3-phosphate + CoA. The catalysed reaction is 1-(9Z-octadecenoyl)-sn-glycero-3-phosphate + tetradecanoyl-CoA = 1-(9Z)-octadecenoyl-2-tetradecanoyl-sn-glycero-3-phosphate + CoA. It catalyses the reaction 1-(9Z-octadecenoyl)-sn-glycero-3-phosphate + hexadecanoyl-CoA = 1-(9Z)-octadecenoyl-2-hexadecanoyl-sn-glycero-3-phosphate + CoA. The enzyme catalyses 1-(9Z-octadecenoyl)-sn-glycero-3-phosphate + octadecanoyl-CoA = 1-(9Z-octadecenoyl)-2-octadecanoyl-sn-glycero-3-phosphate + CoA. It carries out the reaction 1-(9Z-octadecenoyl)-sn-glycero-3-phosphate + (9Z,12Z)-octadecadienoyl-CoA = 1-(9Z)-octadecenoyl-2-(9Z,12Z)-octadecadienoyl-sn-glycero-3-phosphate + CoA. The catalysed reaction is 1-(5Z,8Z,11Z,14Z-eicosatetraenoyl)-sn-glycero-3-phosphate + (9Z)-octadecenoyl-CoA = 1-(5Z,8Z,11Z,14Z)-eicosatetraenoyl-2-(9Z)-octadecenoyl-sn-glycero-3-phosphate + CoA. Its pathway is glycerolipid metabolism; triacylglycerol biosynthesis. It functions in the pathway phospholipid metabolism; CDP-diacylglycerol biosynthesis; CDP-diacylglycerol from sn-glycerol 3-phosphate: step 1/3. Its function is as follows. Converts glycerol-3-phosphate to 1-acyl-sn-glycerol-3-phosphate (lysophosphatidic acid or LPA) by incorporating an acyl moiety at the sn-1 position of the glycerol backbone. Also converts LPA into 1,2-diacyl-sn-glycerol-3-phosphate (phosphatidic acid or PA) by incorporating an acyl moiety at the sn-2 position of the glycerol backbone. Protects cells against lipotoxicity. This Rattus norvegicus (Rat) protein is Glycerol-3-phosphate acyltransferase 3.